The following is a 299-amino-acid chain: Tetrahydromethanopterin S-methyltransferase subunit E (299 aa).

The next 6 membrane-spanning stretches (helical) occupy residues 57–79 (AISG…AWAL), 89–111 (AIIV…AFLG), 132–154 (HIGP…AYLA), 164–183 (LPLV…SSTG), 227–246 (FCSR…IIFL), and 261–283 (LVTK…AVIN).

This sequence belongs to the MtrE family. In terms of assembly, the complex is composed of 8 subunits; MtrA, MtrB, MtrC, MtrD, MtrE, MtrF, MtrG and MtrH.

The protein resides in the cell membrane. The catalysed reaction is 5-methyl-5,6,7,8-tetrahydromethanopterin + coenzyme M + 2 Na(+)(in) = 5,6,7,8-tetrahydromethanopterin + methyl-coenzyme M + 2 Na(+)(out). The protein operates within one-carbon metabolism; methanogenesis from CO(2); methyl-coenzyme M from 5,10-methylene-5,6,7,8-tetrahydromethanopterin: step 2/2. Functionally, part of a complex that catalyzes the formation of methyl-coenzyme M and tetrahydromethanopterin from coenzyme M and methyl-tetrahydromethanopterin. This is an energy-conserving, sodium-ion translocating step. The sequence is that of Tetrahydromethanopterin S-methyltransferase subunit E from Methanococcus maripaludis (strain DSM 14266 / JCM 13030 / NBRC 101832 / S2 / LL).